The chain runs to 407 residues: Probable succinyl-diaminopimelate desuccinylase (407 aa).

Residue His-72 coordinates Zn(2+). Asp-74 is a catalytic residue. Asp-105 lines the Zn(2+) pocket. Catalysis depends on Glu-139, which acts as the Proton acceptor. Zn(2+) is bound by residues Glu-140, Glu-165, and His-378.

It belongs to the peptidase M20A family. Zn(2+) serves as cofactor. It depends on Co(2+) as a cofactor.

It carries out the reaction N-succinyl-(2S,6S)-2,6-diaminopimelate + H2O = (2S,6S)-2,6-diaminopimelate + succinate. It participates in amino-acid biosynthesis; L-lysine biosynthesis via DAP pathway; LL-2,6-diaminopimelate from (S)-tetrahydrodipicolinate (succinylase route): step 3/3. The sequence is that of Probable succinyl-diaminopimelate desuccinylase (dapE) from Staphylococcus aureus (strain MSSA476).